A 429-amino-acid polypeptide reads, in one-letter code: Chaperone SurA (429 aa).

A signal peptide spans 1 to 18; the sequence is MFKRIALVCALFSGICFA. 2 PpiC domains span residues 170-271 and 281-380; these read NLTY…KLVA and ITQT…EVIA.

The protein resides in the periplasm. It carries out the reaction [protein]-peptidylproline (omega=180) = [protein]-peptidylproline (omega=0). Its function is as follows. Chaperone involved in the correct folding and assembly of outer membrane proteins. Recognizes specific patterns of aromatic residues and the orientation of their side chains, which are found more frequently in integral outer membrane proteins. May act in both early periplasmic and late outer membrane-associated steps of protein maturation. The protein is Chaperone SurA of Legionella pneumophila (strain Paris).